Here is a 452-residue protein sequence, read N- to C-terminus: Bifunctional protein GlmU (452 aa).

The interval 1-226 (MKNIHAIILA…KFEIAGVNDK (226 aa)) is pyrophosphorylase. Residues 9–12 (LAAG), K23, Q73, 78–79 (GT), 100–102 (YGD), G137, E151, N166, and N224 each bind UDP-N-acetyl-alpha-D-glucosamine. D102 contributes to the Mg(2+) binding site. N224 contributes to the Mg(2+) binding site. The interval 227–247 (VQLAELERIFQINQATQFMQQ) is linker. The segment at 248 to 452 (GLSLKDPNRF…LKNWQRPTKK (205 aa)) is N-acetyltransferase. 2 residues coordinate UDP-N-acetyl-alpha-D-glucosamine: R330 and K348. H360 (proton acceptor) is an active-site residue. Residues Y363 and N374 each contribute to the UDP-N-acetyl-alpha-D-glucosamine site. Acetyl-CoA contacts are provided by residues A377, 383–384 (NY), S402, A420, and R437.

It in the N-terminal section; belongs to the N-acetylglucosamine-1-phosphate uridyltransferase family. The protein in the C-terminal section; belongs to the transferase hexapeptide repeat family. In terms of assembly, homotrimer. It depends on Mg(2+) as a cofactor.

The protein localises to the cytoplasm. It catalyses the reaction alpha-D-glucosamine 1-phosphate + acetyl-CoA = N-acetyl-alpha-D-glucosamine 1-phosphate + CoA + H(+). The enzyme catalyses N-acetyl-alpha-D-glucosamine 1-phosphate + UTP + H(+) = UDP-N-acetyl-alpha-D-glucosamine + diphosphate. Its pathway is nucleotide-sugar biosynthesis; UDP-N-acetyl-alpha-D-glucosamine biosynthesis; N-acetyl-alpha-D-glucosamine 1-phosphate from alpha-D-glucosamine 6-phosphate (route II): step 2/2. It participates in nucleotide-sugar biosynthesis; UDP-N-acetyl-alpha-D-glucosamine biosynthesis; UDP-N-acetyl-alpha-D-glucosamine from N-acetyl-alpha-D-glucosamine 1-phosphate: step 1/1. It functions in the pathway bacterial outer membrane biogenesis; LPS lipid A biosynthesis. Its function is as follows. Catalyzes the last two sequential reactions in the de novo biosynthetic pathway for UDP-N-acetylglucosamine (UDP-GlcNAc). The C-terminal domain catalyzes the transfer of acetyl group from acetyl coenzyme A to glucosamine-1-phosphate (GlcN-1-P) to produce N-acetylglucosamine-1-phosphate (GlcNAc-1-P), which is converted into UDP-GlcNAc by the transfer of uridine 5-monophosphate (from uridine 5-triphosphate), a reaction catalyzed by the N-terminal domain. This Ruthia magnifica subsp. Calyptogena magnifica protein is Bifunctional protein GlmU.